The primary structure comprises 136 residues: uncharacterized protein (136 aa).

This is an uncharacterized protein from Pseudomonas amygdali pv. tabaci (Pseudomonas syringae pv. tabaci).